Here is a 577-residue protein sequence, read N- to C-terminus: Arginine--tRNA ligase (577 aa).

A 'HIGH' region motif is present at residues 122 to 132; the sequence is PNVAKEMHVGH.

It belongs to the class-I aminoacyl-tRNA synthetase family. As to quaternary structure, monomer.

The protein resides in the cytoplasm. The enzyme catalyses tRNA(Arg) + L-arginine + ATP = L-arginyl-tRNA(Arg) + AMP + diphosphate. In Escherichia coli O7:K1 (strain IAI39 / ExPEC), this protein is Arginine--tRNA ligase.